Here is a 106-residue protein sequence, read N- to C-terminus: Small ribosomal subunit protein uS10 (106 aa).

This sequence belongs to the universal ribosomal protein uS10 family. Part of the 30S ribosomal subunit.

In terms of biological role, involved in the binding of tRNA to the ribosomes. This chain is Small ribosomal subunit protein uS10, found in Pyrobaculum neutrophilum (strain DSM 2338 / JCM 9278 / NBRC 100436 / V24Sta) (Thermoproteus neutrophilus).